Reading from the N-terminus, the 186-residue chain is MSTATSKFLSYVLRHAPESIGLVLDSQGWADVADLLAKANASGTPLDEAGLRAVVAESDKKRFTLSEDGRRIRAAQGHSVKVDLGQPPVEPPPQLFHGTATRFLEPILREGLRPGERQQVHLSADRTTALAVGQRHGKPVVLIVDAGQMFADGCRFYLADNGVWLTDAVPFSYLTVSADSSAENDR.

This sequence belongs to the KptA/TPT1 family.

Functionally, removes the 2'-phosphate from RNA via an intermediate in which the phosphate is ADP-ribosylated by NAD followed by a presumed transesterification to release the RNA and generate ADP-ribose 1''-2''-cyclic phosphate (APPR&gt;P). May function as an ADP-ribosylase. The chain is Probable RNA 2'-phosphotransferase from Agrobacterium fabrum (strain C58 / ATCC 33970) (Agrobacterium tumefaciens (strain C58)).